We begin with the raw amino-acid sequence, 845 residues long: RNA-directed RNA polymerase (845 aa).

248–255 (GLPYIGKT) provides a ligand contact to GTP. The 205-residue stretch at 384–588 (MIYADNIYIL…ENERLIASAA (205 aa)) folds into the RdRp catalytic domain. 2 disordered regions span residues 686-706 (PLDSFDPKARPQTPRSPKKTL) and 799-845 (AGKS…RRNQ). Basic residues predominate over residues 833-845 (KNAKRREKQRRNQ).

In terms of assembly, interacts with VP3 in the cytoplasm. Exists in multiple phosphorylated forms.

It is found in the virion. The enzyme catalyses RNA(n) + a ribonucleoside 5'-triphosphate = RNA(n+1) + diphosphate. Its function is as follows. RNA-dependent RNA polymerase which is found both free and covalently attached to the genomic RNA. May also contain guanylyl and methyl transferase activities. This is RNA-directed RNA polymerase (VP1) from Oncorhynchus mykiss (Rainbow trout).